The chain runs to 238 residues: MASNWRASASWYSHPVYARYWQHYHHAMLWMQGHQNAYRKFRDSYFTSPWLFPHGALPWNSPAYEAGHPWDSQGQHMAQQESPYRVSHPKSPGQPLRNSSRTQASTRGNEARCEEEELESDSDDEVECDLSNMEITEELRQYFAQTERHREERRRQQQLDAERLNDYVNADHGLYFNHRRSLEPPSEKPWERRQAEMKRLYGNSAPKILAMETAVQLSFDKHCDRKQPKYWPVIPLKF.

A disordered region spans residues 66–127 (AGHPWDSQGQ…LESDSDDEVE (62 aa)). Polar residues-rich tracts occupy residues 72–82 (SQGQHMAQQES) and 96–108 (LRNS…STRG). The span at 113-127 (CEEEELESDSDDEVE) shows a compositional bias: acidic residues. The residue at position 122 (Ser122) is a Phosphoserine. A coiled-coil region spans residues 131-164 (SNMEITEELRQYFAQTERHREERRRQQQLDAERL).

Part of the core SMN complex that contains SMN1, GEMIN2/SIP1, DDX20/GEMIN3, GEMIN4, GEMIN5, GEMIN6, GEMIN7, GEMIN8 and STRAP/UNRIP. Part of the SMN-Sm complex that contains SMN1, GEMIN2/SIP1, DDX20/GEMIN3, GEMIN4, GEMIN5, GEMIN6, GEMIN7, GEMIN8, STRAP/UNRIP and the Sm proteins SNRPB, SNRPD1, SNRPD2, SNRPD3, SNRPE, SNRPF and SNRPG. Interacts with GEMIN6; the interaction is direct. Interacts with GEMIN7; the interaction is direct. Interacts with SMN1; the interaction is direct. Interacts with GEMIN4; the interaction is direct. Widely expressed in embryonic tissues (at protein level).

It localises to the nucleus. It is found in the gem. The protein resides in the cytoplasm. The SMN complex catalyzes the assembly of small nuclear ribonucleoproteins (snRNPs), the building blocks of the spliceosome, and thereby plays an important role in the splicing of cellular pre-mRNAs. Most spliceosomal snRNPs contain a common set of Sm proteins SNRPB, SNRPD1, SNRPD2, SNRPD3, SNRPE, SNRPF and SNRPG that assemble in a heptameric protein ring on the Sm site of the small nuclear RNA to form the core snRNP (Sm core). In the cytosol, the Sm proteins SNRPD1, SNRPD2, SNRPE, SNRPF and SNRPG are trapped in an inactive 6S pICln-Sm complex by the chaperone CLNS1A that controls the assembly of the core snRNP. To assemble core snRNPs, the SMN complex accepts the trapped 5Sm proteins from CLNS1A forming an intermediate. Binding of snRNA inside 5Sm triggers eviction of the SMN complex, thereby allowing binding of SNRPD3 and SNRPB to complete assembly of the core snRNP. The polypeptide is Gem-associated protein 8 (Gemin8) (Mus musculus (Mouse)).